Reading from the N-terminus, the 190-residue chain is dCTP deaminase, dUMP-forming (190 aa).

Residues 101–106, Asp-119, 127–129, Gln-148, Tyr-162, and Gln-174 contribute to the dCTP site; these read KSSLGR and TLE. Residue Glu-129 is the Proton donor/acceptor of the active site. A disordered region spans residues 163–190; it reads GSTRVGSKYQGQRGPTPSRSYQNFITST. Polar residues predominate over residues 171-190; it reads YQGQRGPTPSRSYQNFITST.

This sequence belongs to the dCTP deaminase family. In terms of assembly, homotrimer.

The catalysed reaction is dCTP + 2 H2O = dUMP + NH4(+) + diphosphate. Its pathway is pyrimidine metabolism; dUMP biosynthesis; dUMP from dCTP: step 1/1. Bifunctional enzyme that catalyzes both the deamination of dCTP to dUTP and the hydrolysis of dUTP to dUMP without releasing the toxic dUTP intermediate. The chain is dCTP deaminase, dUMP-forming from Mycobacterium avium (strain 104).